A 494-amino-acid chain; its full sequence is UPF0371 protein SPH_0451 (494 aa).

This sequence belongs to the UPF0371 family.

The protein is UPF0371 protein SPH_0451 of Streptococcus pneumoniae (strain Hungary19A-6).